The chain runs to 337 residues: Tetraacyldisaccharide 4'-kinase (337 aa).

55–62 (TAGGNGKT) provides a ligand contact to ATP.

The protein belongs to the LpxK family.

It catalyses the reaction a lipid A disaccharide + ATP = a lipid IVA + ADP + H(+). It participates in glycolipid biosynthesis; lipid IV(A) biosynthesis; lipid IV(A) from (3R)-3-hydroxytetradecanoyl-[acyl-carrier-protein] and UDP-N-acetyl-alpha-D-glucosamine: step 6/6. Functionally, transfers the gamma-phosphate of ATP to the 4'-position of a tetraacyldisaccharide 1-phosphate intermediate (termed DS-1-P) to form tetraacyldisaccharide 1,4'-bis-phosphate (lipid IVA). The sequence is that of Tetraacyldisaccharide 4'-kinase from Sodalis glossinidius (strain morsitans).